Consider the following 392-residue polypeptide: Sulfate adenylyltransferase (392 aa).

It belongs to the sulfate adenylyltransferase family.

The enzyme catalyses sulfate + ATP + H(+) = adenosine 5'-phosphosulfate + diphosphate. Its pathway is sulfur metabolism; hydrogen sulfide biosynthesis; sulfite from sulfate: step 1/3. In Trichormus variabilis (strain ATCC 29413 / PCC 7937) (Anabaena variabilis), this protein is Sulfate adenylyltransferase.